The chain runs to 496 residues: MRVLSGTSLMLCSLLLLLQALCSPGLAPQSRGHLCRTRPTDLVFVVDSSRSVRPVEFEKVKVFLSQVIESLDVGPNATRVGMVNYASTVKQEFSLRAHVSKAALLQAVRRIQPLSTGTMTGLAIQFAITKAFGDAEGGRSRSPDISKVVIVVTDGRPQDSVQDVSARARASGVELFAIGVGSVDKATLRQIASEPQDEHVDYVESYSVIEKLSRKFQEAFCVVSDLCATGDHDCEQVCISSPGSYTCACHEGFTLNSDGKTCNVCSGGGGSSATDLVFLIDGSKSVRPENFELVKKFISQIVDTLDVSDKLAQVGLVQYSSSVRQEFPLGRFHTKKDIKAAVRNMSYMEKGTMTGAALKYLIDNSFTVSSGARPGAQKVGIVFTDGRSQDYINDAAKKAKDLGFKMFAVGVGNAVEDELREIASEPVAEHYFYTADFKTINQIGKKLQKKICVEEDPCACESLVKFQAKVEGLLQALTRKLEAVSKRLAILENTVV.

The first 22 residues, 1-22 (MRVLSGTSLMLCSLLLLLQALC), serve as a signal peptide directing secretion. A VWFA 1 domain is found at 23 to 222 (SPGLAPQSRG…SRKFQEAFCV (200 aa)). Asparagine 76 is a glycosylation site (N-linked (GlcNAc...) asparagine). The EGF-like domain maps to 223-263 (VSDLCATGDHDCEQVCISSPGSYTCACHEGFTLNSDGKTCN). Intrachain disulfides connect cysteine 227–cysteine 238, cysteine 234–cysteine 247, and cysteine 249–cysteine 262. One can recognise a VWFA 2 domain in the interval 264-453 (VCSGGGGSSA…GKKLQKKICV (190 aa)). Asparagine 344 carries N-linked (GalNAc...) asparagine glycosylation. Residues 467–495 (QAKVEGLLQALTRKLEAVSKRLAILENTV) are a coiled coil.

As to quaternary structure, homotrimer. Part of a complex composed of MATN1 (via VWFA1 domain), type 2 collagens and type 6 collagens. Forms a complex (via covalent bonds) with ACAN; the interaction increases in abundance with increasing age of the organism via an increase in occupancy of MATN1 binding sites. Interacts with COMP. In terms of processing, N-glycosylated; reduces binding affinity for type 2 collagens.

The protein localises to the secreted. The protein resides in the extracellular space. Its subcellular location is the extracellular matrix. In terms of biological role, a major component of the extracellular matrix of non-articular cartilage. Binds to type 2 collagens and forms long concatenated protein networks as part of the extracellular matrix. Required for the network-like organization and bundling of collagen fibrils surrounding chondrocytes in the zones of maturation and hypertrophy. Required for mechanotransduction and adaption to mechanical loading in cartilage chondrocytes, resulting in an increase in expression of the extracellular matrix components ACAN and COL2A1. Acts as a moderator of angiogenesis in response to injury. The sequence is that of Matrilin-1 from Homo sapiens (Human).